Here is a 33-residue protein sequence, read N- to C-terminus: Photosystem II reaction center protein Psb30 (33 aa).

The chain crosses the membrane as a helical span at residues 5-25 (VILQLGSILLVVAAGPLVIVL).

The protein belongs to the Psb30/Ycf12 family. PSII is composed of 1 copy each of membrane proteins PsbA, PsbB, PsbC, PsbD, PsbE, PsbF, PsbH, PsbI, PsbJ, PsbK, PsbL, PsbM, PsbT, PsbX, PsbY, PsbZ, Psb30/Ycf12, peripheral proteins of the oxygen-evolving complex and a large number of cofactors. It forms dimeric complexes.

The protein localises to the plastid. The protein resides in the chloroplast thylakoid membrane. Its function is as follows. A core subunit of photosystem II (PSII), probably helps stabilize the reaction center. The chain is Photosystem II reaction center protein Psb30 from Oltmannsiellopsis viridis (Marine flagellate).